Here is a 268-residue protein sequence, read N- to C-terminus: Taurine import ATP-binding protein TauB (268 aa).

In terms of domain architecture, ABC transporter spans 4 to 236; the sequence is LAIRNISMRF…EGVDADLREV (233 aa). 41–48 serves as a coordination point for ATP; sequence GPSGCGKT.

The protein belongs to the ABC transporter superfamily. Taurine importer (TC 3.A.1.17.1) family. The complex is composed of two ATP-binding proteins (TauB), two transmembrane proteins (TauC) and a solute-binding protein (TauA).

It is found in the cell inner membrane. The catalysed reaction is taurine(out) + ATP + H2O = taurine(in) + ADP + phosphate + H(+). In terms of biological role, part of the ABC transporter complex TauABC involved in taurine import. Responsible for energy coupling to the transport system. The sequence is that of Taurine import ATP-binding protein TauB from Jannaschia sp. (strain CCS1).